Consider the following 194-residue polypeptide: MTAITITDAAHDYLADLLSKQNTPGIGIRVFITQPGTQYAETCIAYCKPGEEKPEDTALGLKSFTAYIDSFSEAFLDDAVVDYATDRMGGQLTIKAPNAKVPMVNADSPINERINYYLQTEINPGLASHGGQVSLIDVVEDGIAVLQFGGGCQGCGQADVTLKEGIERTLLERIPELKGVRDVTDHTQKENAYY.

[4Fe-4S] cluster is bound by residues cysteine 152 and cysteine 155.

Belongs to the NfuA family. Homodimer. [4Fe-4S] cluster is required as a cofactor.

In terms of biological role, involved in iron-sulfur cluster biogenesis. Binds a 4Fe-4S cluster, can transfer this cluster to apoproteins, and thereby intervenes in the maturation of Fe/S proteins. Could also act as a scaffold/chaperone for damaged Fe/S proteins. This Pseudomonas fluorescens (strain Pf0-1) protein is Fe/S biogenesis protein NfuA.